A 118-amino-acid chain; its full sequence is Sporulation protein YjcA (118 aa).

The next 3 membrane-spanning stretches (helical) occupy residues 8 to 28, 62 to 82, and 92 to 112; these read IVLL…DTIM, FIGE…GFLI, and AQWL…ETLV.

The protein belongs to the UPF0713 family.

The protein resides in the cell membrane. In terms of biological role, involved in sporulation. The protein is Sporulation protein YjcA (yjcA) of Bacillus subtilis (strain 168).